A 688-amino-acid chain; its full sequence is MSKELKLFRNFGIMAHIDAGKTTTSERILYHTGKNHKIGETHDGAATMDWMAQEKERGITITSAATYAKWKGHSLNLIDTPGHVDFTVEVERSLRVLDGAVAVLDGQNGVEPQTETVWRQATKYNVPRIVFVNKMDKTGADFYYSIETMKNRLGVKATAIQIPIGAEADFVGSIDLIEMKAYIYDGQADEEYKIEDIPADYVTKAQVMRSQMIDDVAIFDDEVMEKYLSGEELSHEDIKKCIRKGVISTELYPVLCGTAFKNKGVKKLLDAVVDFLPSPIDVPPIKGVDDHGNPIEYHNDPSEPFAALAFKVATDPFVGRLTYIRVYSGKLDKGTYVYNATKDKKERISRLVKMHSNNRDEIDSISAGDICAVIGLKDTTTGDTICDEKKPVILEQMVFAEPVISLSVEPKTKADQEKMSLALSKLAEEDPTFRTYTNEETGQTIIAGMGELHLDVLVDRMRREFNVQVNVGAPQVSYRETFTEIADAEGKYIKQSGGRGQYGHVWIKFEPNHDKGFEFVDNIVGGKVPKEYIKEVENGLIEALTSGPIAGYQTIDVKATIFDGSYHDVDSSGMAYKIAASLAFKEAAKVCKPVLLEPIMSVDVTTPDDYFGTVMGDISKRRGVIEGQEQRGNAQAIKAKVPLSEMFGYATDLRSNTQGRGQYIMQFSHYAQAPKSVTEEVMAARAKK.

In terms of domain architecture, tr-type G spans 6–280 (KLFRNFGIMA…AVVDFLPSPI (275 aa)). GTP contacts are provided by residues 15 to 22 (AHIDAGKT), 79 to 83 (DTPGH), and 133 to 136 (NKMD).

The protein belongs to the TRAFAC class translation factor GTPase superfamily. Classic translation factor GTPase family. EF-G/EF-2 subfamily.

The protein resides in the cytoplasm. Functionally, catalyzes the GTP-dependent ribosomal translocation step during translation elongation. During this step, the ribosome changes from the pre-translocational (PRE) to the post-translocational (POST) state as the newly formed A-site-bound peptidyl-tRNA and P-site-bound deacylated tRNA move to the P and E sites, respectively. Catalyzes the coordinated movement of the two tRNA molecules, the mRNA and conformational changes in the ribosome. This chain is Elongation factor G, found in Ureaplasma urealyticum serovar 10 (strain ATCC 33699 / Western).